The sequence spans 517 residues: zeta-carotene-forming phytoene desaturase (517 aa).

Residue 11 to 44 participates in FAD binding; sequence VVVGAGVGGLAAAARLAHQGFDVQVFEKTQGPGG.

Belongs to the carotenoid/retinoid oxidoreductase family. FAD is required as a cofactor.

It carries out the reaction 15-cis-phytoene + 2 A = all-trans-zeta-carotene + 2 AH2. It participates in carotenoid biosynthesis; lycopene biosynthesis. In terms of biological role, dehydrogenates carotenes in the cis conformation: has cis-to-trans isomerase activity and mediates dehydrogenation of cis-phytoene, producing zeta-carotene via the intermediary of phytofluene by the symmetrical introduction of 2 double bonds at the C-11 and C-11' positions of phytoene. The chain is zeta-carotene-forming phytoene desaturase (carA2) from Myxococcus xanthus.